Reading from the N-terminus, the 433-residue chain is uncharacterized protein (433 aa).

A run of 11 helical transmembrane segments spans residues 28–48, 56–76, 102–122, 126–146, 164–184, 207–227, 250–270, 304–324, 345–365, 375–395, and 406–426; these read FAALGPGILMASAAVGGSHII, IYGWQLAIIIILANLFKYPFF, IWIFFLLNVFATVINTAAVGL, AILTFVLPVQVPVPTLSFIVI, LSKLIMIALTITTVSAVIIAL, ALGFIVALMGWMPAPIEISAI, FNVGYIGTAILALVFLALGAL, GLIAFIAFMCMFGTTITVIDG, SYLNVAITFAALAGLAIIFYF, FAMIASFVSTPVFAYLNLSLV, and LLWLSLIGLMYLTSFTLLFIA.

The protein localises to the cell membrane. This is an uncharacterized protein from Pasteurella multocida (strain Pm70).